Consider the following 314-residue polypeptide: Mevalonate kinase (314 aa).

An ATP-binding site is contributed by 103–109 (GLGTSAA). D150 functions as the Proton acceptor in the catalytic mechanism.

Belongs to the GHMP kinase family. Mevalonate kinase subfamily. Homodimer. Mg(2+) is required as a cofactor.

Its subcellular location is the cytoplasm. It carries out the reaction (R)-mevalonate + ATP = (R)-5-phosphomevalonate + ADP + H(+). It functions in the pathway isoprenoid biosynthesis; isopentenyl diphosphate biosynthesis via mevalonate pathway; isopentenyl diphosphate from (R)-mevalonate: step 1/3. Functionally, catalyzes the phosphorylation of (R)-mevalonate (MVA) to (R)-mevalonate 5-phosphate (MVAP). Functions in the mevalonate (MVA) pathway leading to isopentenyl diphosphate (IPP), a key precursor for the biosynthesis of isoprenoid compounds such as archaeal membrane lipids. In Saccharolobus solfataricus (strain ATCC 35092 / DSM 1617 / JCM 11322 / P2) (Sulfolobus solfataricus), this protein is Mevalonate kinase.